Consider the following 364-residue polypeptide: DNA replication and repair protein RecF (364 aa).

30-37 (GENAQGKT) is an ATP binding site.

This sequence belongs to the RecF family.

It localises to the cytoplasm. In terms of biological role, the RecF protein is involved in DNA metabolism; it is required for DNA replication and normal SOS inducibility. RecF binds preferentially to single-stranded, linear DNA. It also seems to bind ATP. The polypeptide is DNA replication and repair protein RecF (Streptococcus suis (strain 98HAH33)).